The sequence spans 306 residues: Non-homologous end joining protein Ku 2 (306 aa).

The Ku domain occupies 21–206 (ISFGLVNIGV…EVSKQEIDMA (186 aa)). The segment at 233–306 (LIDAKTKGTK…GSRDKTRKRA (74 aa)) is disordered. Positions 274–290 (RTSRRKTTASASRRRSS) are enriched in basic residues. Over residues 291-300 (SNREKTGSRD) the composition is skewed to basic and acidic residues.

Belongs to the prokaryotic Ku family. In terms of assembly, homodimer. Interacts with LigD.

With LigD forms a non-homologous end joining (NHEJ) DNA repair enzyme, which repairs dsDNA breaks with reduced fidelity. Binds linear dsDNA with 5'- and 3'- overhangs but not closed circular dsDNA nor ssDNA. Recruits and stimulates the ligase activity of LigD. The chain is Non-homologous end joining protein Ku 2 from Saccharopolyspora erythraea (strain ATCC 11635 / DSM 40517 / JCM 4748 / NBRC 13426 / NCIMB 8594 / NRRL 2338).